We begin with the raw amino-acid sequence, 181 residues long: Protein canopy homolog 1 (181 aa).

The N-terminal stretch at 1-21 is a signal peptide; that stretch reads MAILLHFGVLITAFLSSHVEG. Residues 25 to 177 enclose the Saposin B-type domain; the sequence is PILYCGACRA…EETGLCKEYL (153 aa). 3 disulfide bridges follow: C29–C173, C32–C166, and C87–C139. The short motif at 178-181 is the Prevents secretion from ER element; the sequence is HNEL.

This sequence belongs to the canopy family.

It localises to the endoplasmic reticulum. Its function is as follows. Plays an role in early embryonic development. This Xenopus laevis (African clawed frog) protein is Protein canopy homolog 1 (cnpy1).